The sequence spans 255 residues: Aspartate/glutamate leucyltransferase (255 aa).

Belongs to the R-transferase family. Bpt subfamily.

Its subcellular location is the cytoplasm. It carries out the reaction N-terminal L-glutamyl-[protein] + L-leucyl-tRNA(Leu) = N-terminal L-leucyl-L-glutamyl-[protein] + tRNA(Leu) + H(+). The catalysed reaction is N-terminal L-aspartyl-[protein] + L-leucyl-tRNA(Leu) = N-terminal L-leucyl-L-aspartyl-[protein] + tRNA(Leu) + H(+). In terms of biological role, functions in the N-end rule pathway of protein degradation where it conjugates Leu from its aminoacyl-tRNA to the N-termini of proteins containing an N-terminal aspartate or glutamate. This Leptospira borgpetersenii serovar Hardjo-bovis (strain JB197) protein is Aspartate/glutamate leucyltransferase.